The sequence spans 291 residues: Acetyl-coenzyme A carboxylase carboxyl transferase subunit beta (291 aa).

The 263-residue stretch at 29–291 (LWSKCPECGE…MHQQPAAVSA (263 aa)) folds into the CoA carboxyltransferase N-terminal domain. Residues Cys33, Cys36, Cys52, and Cys55 each coordinate Zn(2+). Residues 33–55 (CPECGEVVYRKDLIANASVCASC) form a C4-type zinc finger.

The protein belongs to the AccD/PCCB family. As to quaternary structure, acetyl-CoA carboxylase is a heterohexamer composed of biotin carboxyl carrier protein (AccB), biotin carboxylase (AccC) and two subunits each of ACCase subunit alpha (AccA) and ACCase subunit beta (AccD). The cofactor is Zn(2+).

Its subcellular location is the cytoplasm. The catalysed reaction is N(6)-carboxybiotinyl-L-lysyl-[protein] + acetyl-CoA = N(6)-biotinyl-L-lysyl-[protein] + malonyl-CoA. It functions in the pathway lipid metabolism; malonyl-CoA biosynthesis; malonyl-CoA from acetyl-CoA: step 1/1. Component of the acetyl coenzyme A carboxylase (ACC) complex. Biotin carboxylase (BC) catalyzes the carboxylation of biotin on its carrier protein (BCCP) and then the CO(2) group is transferred by the transcarboxylase to acetyl-CoA to form malonyl-CoA. This chain is Acetyl-coenzyme A carboxylase carboxyl transferase subunit beta, found in Synechococcus sp. (strain RCC307).